The primary structure comprises 376 residues: Ribonucleoside-diphosphate reductase subunit beta (376 aa).

Fe cation is bound by residues Asp85, Glu116, and His119. The active site involves Tyr123. Residues Glu205, Glu239, and His242 each coordinate Fe cation.

Belongs to the ribonucleoside diphosphate reductase small chain family. In terms of assembly, tetramer of two alpha and two beta subunits. Fe cation serves as cofactor.

It carries out the reaction a 2'-deoxyribonucleoside 5'-diphosphate + [thioredoxin]-disulfide + H2O = a ribonucleoside 5'-diphosphate + [thioredoxin]-dithiol. Functionally, provides the precursors necessary for DNA synthesis. Catalyzes the biosynthesis of deoxyribonucleotides from the corresponding ribonucleotides. The polypeptide is Ribonucleoside-diphosphate reductase subunit beta (nrdB) (Buchnera aphidicola subsp. Baizongia pistaciae (strain Bp)).